A 1339-amino-acid chain; its full sequence is DNA-directed RNA polymerase subunit beta'' (1339 aa).

Cys-226, Cys-299, Cys-306, and Cys-309 together coordinate Zn(2+).

The protein belongs to the RNA polymerase beta' chain family. RpoC2 subfamily. In plastids the minimal PEP RNA polymerase catalytic core is composed of four subunits: alpha, beta, beta', and beta''. When a (nuclear-encoded) sigma factor is associated with the core the holoenzyme is formed, which can initiate transcription. It depends on Zn(2+) as a cofactor.

The protein resides in the plastid. It is found in the chloroplast. The enzyme catalyses RNA(n) + a ribonucleoside 5'-triphosphate = RNA(n+1) + diphosphate. DNA-dependent RNA polymerase catalyzes the transcription of DNA into RNA using the four ribonucleoside triphosphates as substrates. The polypeptide is DNA-directed RNA polymerase subunit beta'' (Cycas taitungensis (Prince sago)).